The chain runs to 314 residues: Glycerol-3-phosphate dehydrogenase [NAD(P)+] (314 aa).

NADPH contacts are provided by serine 14, phenylalanine 15, arginine 35, and lysine 108. The sn-glycerol 3-phosphate site is built by lysine 108 and glycine 136. NADPH is bound at residue alanine 140. Sn-glycerol 3-phosphate is bound by residues lysine 191, aspartate 247, serine 257, arginine 258, and asparagine 259. Lysine 191 acts as the Proton acceptor in catalysis. Position 258 (arginine 258) interacts with NADPH. Residues leucine 282 and glutamate 284 each contribute to the NADPH site.

Belongs to the NAD-dependent glycerol-3-phosphate dehydrogenase family.

It localises to the cytoplasm. It carries out the reaction sn-glycerol 3-phosphate + NAD(+) = dihydroxyacetone phosphate + NADH + H(+). The catalysed reaction is sn-glycerol 3-phosphate + NADP(+) = dihydroxyacetone phosphate + NADPH + H(+). The protein operates within membrane lipid metabolism; glycerophospholipid metabolism. Its function is as follows. Catalyzes the reduction of the glycolytic intermediate dihydroxyacetone phosphate (DHAP) to sn-glycerol 3-phosphate (G3P), the key precursor for phospholipid synthesis. The sequence is that of Glycerol-3-phosphate dehydrogenase [NAD(P)+] from Rickettsia bellii (strain OSU 85-389).